A 319-amino-acid chain; its full sequence is Aspartate carbamoyltransferase catalytic subunit (319 aa).

The carbamoyl phosphate site is built by Arg54 and Thr55. L-aspartate is bound at residue Lys82. Positions 104, 134, and 137 each coordinate carbamoyl phosphate. L-aspartate contacts are provided by Arg171 and Arg227. Carbamoyl phosphate contacts are provided by Gly271 and Pro272.

The protein belongs to the aspartate/ornithine carbamoyltransferase superfamily. ATCase family. Heterododecamer (2C3:3R2) of six catalytic PyrB chains organized as two trimers (C3), and six regulatory PyrI chains organized as three dimers (R2).

It carries out the reaction carbamoyl phosphate + L-aspartate = N-carbamoyl-L-aspartate + phosphate + H(+). It participates in pyrimidine metabolism; UMP biosynthesis via de novo pathway; (S)-dihydroorotate from bicarbonate: step 2/3. Functionally, catalyzes the condensation of carbamoyl phosphate and aspartate to form carbamoyl aspartate and inorganic phosphate, the committed step in the de novo pyrimidine nucleotide biosynthesis pathway. The sequence is that of Aspartate carbamoyltransferase catalytic subunit from Kineococcus radiotolerans (strain ATCC BAA-149 / DSM 14245 / SRS30216).